We begin with the raw amino-acid sequence, 540 residues long: Glucose-6-phosphate isomerase (540 aa).

Glu350 functions as the Proton donor in the catalytic mechanism. Residues His381 and Lys503 contribute to the active site.

The protein belongs to the GPI family.

It is found in the cytoplasm. The catalysed reaction is alpha-D-glucose 6-phosphate = beta-D-fructose 6-phosphate. It participates in carbohydrate biosynthesis; gluconeogenesis. It functions in the pathway carbohydrate degradation; glycolysis; D-glyceraldehyde 3-phosphate and glycerone phosphate from D-glucose: step 2/4. Functionally, catalyzes the reversible isomerization of glucose-6-phosphate to fructose-6-phosphate. The sequence is that of Glucose-6-phosphate isomerase from Burkholderia lata (strain ATCC 17760 / DSM 23089 / LMG 22485 / NCIMB 9086 / R18194 / 383).